A 626-amino-acid polypeptide reads, in one-letter code: ATP-dependent zinc metalloprotease FtsH (626 aa).

The Cytoplasmic portion of the chain corresponds to 1 to 7; sequence MNGNRPN. A helical membrane pass occupies residues 8–28; it reads YISLIFAALVILSLFWLVRSF. Residues 29–108 are Periplasmic-facing; the sequence is YFDTSAPSKM…VTGEKGVSSS (80 aa). Residues 109–129 form a helical membrane-spanning segment; it reads FWVNVIGNVIFIGFLLFMFFF. Residues 130–626 lie on the Cytoplasmic side of the membrane; that stretch reads MMRTISGRNN…RAAAGSEQDS (497 aa). Residue 202 to 209 participates in ATP binding; the sequence is GPPGTGKT. Histidine 424 contacts Zn(2+). Glutamate 425 is a catalytic residue. Residues histidine 428 and aspartate 501 each coordinate Zn(2+).

The protein in the central section; belongs to the AAA ATPase family. In the C-terminal section; belongs to the peptidase M41 family. As to quaternary structure, homohexamer. Requires Zn(2+) as cofactor.

It localises to the cell inner membrane. In terms of biological role, acts as a processive, ATP-dependent zinc metallopeptidase for both cytoplasmic and membrane proteins. Plays a role in the quality control of integral membrane proteins. This is ATP-dependent zinc metalloprotease FtsH from Pseudothermotoga lettingae (strain ATCC BAA-301 / DSM 14385 / NBRC 107922 / TMO) (Thermotoga lettingae).